The chain runs to 126 residues: Glycine cleavage system H protein (126 aa).

The Lipoyl-binding domain occupies 21 to 103; that stretch reads TVTVGISNHA…YEGGWIARIK (83 aa). Lysine 62 is subject to N6-lipoyllysine.

Belongs to the GcvH family. The glycine cleavage system is composed of four proteins: P, T, L and H. The cofactor is (R)-lipoate.

Functionally, the glycine cleavage system catalyzes the degradation of glycine. The H protein shuttles the methylamine group of glycine from the P protein to the T protein. This Aliivibrio salmonicida (strain LFI1238) (Vibrio salmonicida (strain LFI1238)) protein is Glycine cleavage system H protein.